We begin with the raw amino-acid sequence, 463 residues long: Glutamate--tRNA ligase 2 (463 aa).

A 'HIGH' region motif is present at residues 10-20 (PSPTGFLHIGS). The 'KMSKS' region signature appears at 239–243 (KLSKR). Position 242 (Lys242) interacts with ATP.

This sequence belongs to the class-I aminoacyl-tRNA synthetase family. Glutamate--tRNA ligase type 1 subfamily. As to quaternary structure, monomer.

The protein resides in the cytoplasm. It carries out the reaction tRNA(Glu) + L-glutamate + ATP = L-glutamyl-tRNA(Glu) + AMP + diphosphate. Functionally, catalyzes the attachment of glutamate to tRNA(Glu) in a two-step reaction: glutamate is first activated by ATP to form Glu-AMP and then transferred to the acceptor end of tRNA(Glu). The sequence is that of Glutamate--tRNA ligase 2 from Rickettsia felis (strain ATCC VR-1525 / URRWXCal2) (Rickettsia azadi).